Here is a 601-residue protein sequence, read N- to C-terminus: Glutathione-regulated potassium-efflux system protein KefB (601 aa).

The next 13 membrane-spanning stretches (helical) occupy residues S4 to A24, I29 to F49, E55 to L75, I87 to M107, A115 to M135, V152 to G172, H177 to G197, F207 to G227, L230 to L250, G268 to Y288, L291 to L311, M324 to A344, and A356 to V376. An RCK N-terminal domain is found at K400–T519.

The protein belongs to the monovalent cation:proton antiporter 2 (CPA2) transporter (TC 2.A.37) family. KefB subfamily. As to quaternary structure, interacts with the regulatory subunit KefG.

It localises to the cell inner membrane. Pore-forming subunit of a potassium efflux system that confers protection against electrophiles. Catalyzes K(+)/H(+) antiport. The polypeptide is Glutathione-regulated potassium-efflux system protein KefB (Escherichia coli O139:H28 (strain E24377A / ETEC)).